Reading from the N-terminus, the 46-residue chain is Large ribosomal subunit protein bL34c (46 aa).

Belongs to the bacterial ribosomal protein bL34 family.

The protein localises to the plastid. Its subcellular location is the chloroplast. This chain is Large ribosomal subunit protein bL34c, found in Pyropia yezoensis (Susabi-nori).